Reading from the N-terminus, the 259-residue chain is Phosphatidylglycerol--prolipoprotein diacylglyceryl transferase (259 aa).

A run of 7 helical transmembrane segments spans residues 9–29 (LGPL…ILAV), 48–68 (DFIL…YVIF), 83–103 (IWHG…VLFI), 114–133 (DFLD…GRWG), 167–187 (TPTF…IMIL), 197–217 (GEVA…IEGM), and 227–247 (LRVS…LIVI). A 1,2-diacyl-sn-glycero-3-phospho-(1'-sn-glycerol) is bound at residue Arg131.

This sequence belongs to the Lgt family.

Its subcellular location is the cell membrane. It carries out the reaction L-cysteinyl-[prolipoprotein] + a 1,2-diacyl-sn-glycero-3-phospho-(1'-sn-glycerol) = an S-1,2-diacyl-sn-glyceryl-L-cysteinyl-[prolipoprotein] + sn-glycerol 1-phosphate + H(+). Its pathway is protein modification; lipoprotein biosynthesis (diacylglyceryl transfer). In terms of biological role, catalyzes the transfer of the diacylglyceryl group from phosphatidylglycerol to the sulfhydryl group of the N-terminal cysteine of a prolipoprotein, the first step in the formation of mature lipoproteins. The chain is Phosphatidylglycerol--prolipoprotein diacylglyceryl transferase from Streptococcus mutans serotype c (strain ATCC 700610 / UA159).